Reading from the N-terminus, the 112-residue chain is Colipase (112 aa).

Positions 1–17 are cleaved as a signal peptide; the sequence is MEKILVLLLVALAVVYA. Residues 18–22 constitute a propeptide, enterostatin, activation peptide; it reads VPDPR. Cystine bridges form between Cys34–Cys45, Cys40–Cys56, Cys44–Cys78, Cys66–Cys86, and Cys80–Cys104.

This sequence belongs to the colipase family. Forms a 1:1 stoichiometric complex with pancreatic lipase. As to expression, expressed by the pancreas.

It is found in the secreted. In terms of biological role, colipase is a cofactor of pancreatic lipase. It allows the lipase to anchor itself to the lipid-water interface. Without colipase the enzyme is washed off by bile salts, which have an inhibitory effect on the lipase. Functionally, enterostatin has a biological activity as a satiety signal. In Canis lupus familiaris (Dog), this protein is Colipase (CLPS).